The chain runs to 108 residues: Cytochrome bo(3) ubiquinol oxidase subunit 4 (108 aa).

The Cytoplasmic segment spans residues 1–16 (MNKYKKIKNNFDKEKK). Residues 17–37 (SYIVGFLFSLFLTIIPFFCTL) traverse the membrane as a helical segment. The Extracellular segment spans residues 38 to 46 (NHLFSRKIN). Residues 47 to 67 (FFVILLCALSQIIIHFIYFLH) form a helical membrane-spanning segment. Over 68–77 (LDFSKKNSWN) the chain is Cytoplasmic. Residues 78–98 (IISLLFILIIVFIIVFGSIWI) traverse the membrane as a helical segment. Residues 99–108 (MYNLNHHVIL) lie on the Extracellular side of the membrane.

Belongs to the cytochrome c oxidase bacterial subunit 4 family. As to quaternary structure, heterooctamer of two A chains, two B chains, two C chains and two D chains.

It is found in the cell membrane. Functionally, cytochrome bo(3) ubiquinol terminal oxidase is the component of the aerobic respiratory chain of E.coli that predominates when cells are grown at high aeration. Has proton pump activity across the membrane in addition to electron transfer, pumping 2 protons/electron. The chain is Cytochrome bo(3) ubiquinol oxidase subunit 4 (cyoD) from Buchnera aphidicola subsp. Schizaphis graminum (strain Sg).